The following is a 530-amino-acid chain: UDP-glucuronosyltransferase 2B31 (530 aa).

An N-terminal signal peptide occupies residues Met1 to Gly24. The residue at position 136 (Lys136) is an N6-succinyllysine. The N-linked (GlcNAc...) asparagine glycan is linked to Asn316. Residues Ile495–Phe515 form a helical membrane-spanning segment.

Belongs to the UDP-glycosyltransferase family.

It localises to the microsome membrane. It is found in the endoplasmic reticulum membrane. The enzyme catalyses glucuronate acceptor + UDP-alpha-D-glucuronate = acceptor beta-D-glucuronoside + UDP + H(+). UDPGTs are of major importance in the conjugation and subsequent elimination of potentially toxic xenobiotics and endogenous compounds. This isozyme has glucuronidating capacity on phenols, opioids, and carboxylic acid-containing drugs. This Canis lupus familiaris (Dog) protein is UDP-glucuronosyltransferase 2B31 (UGT2B31).